The primary structure comprises 502 residues: Glycerol kinase (502 aa).

Threonine 14 lines the ADP pocket. ATP-binding residues include threonine 14 and threonine 15. Position 14 (threonine 14) interacts with sn-glycerol 3-phosphate. An ADP-binding site is contributed by arginine 18. Arginine 84, glutamate 85, tyrosine 136, and aspartate 245 together coordinate sn-glycerol 3-phosphate. Residues arginine 84, glutamate 85, tyrosine 136, aspartate 245, and glutamine 246 each coordinate glycerol. Threonine 267 and glycine 314 together coordinate ADP. ATP contacts are provided by threonine 267, glycine 314, glutamine 318, and glycine 415. ADP contacts are provided by glycine 415 and asparagine 419.

This sequence belongs to the FGGY kinase family.

The enzyme catalyses glycerol + ATP = sn-glycerol 3-phosphate + ADP + H(+). Its pathway is polyol metabolism; glycerol degradation via glycerol kinase pathway; sn-glycerol 3-phosphate from glycerol: step 1/1. With respect to regulation, inhibited by fructose 1,6-bisphosphate (FBP). In terms of biological role, key enzyme in the regulation of glycerol uptake and metabolism. Catalyzes the phosphorylation of glycerol to yield sn-glycerol 3-phosphate. This is Glycerol kinase from Acaryochloris marina (strain MBIC 11017).